Consider the following 161-residue polypeptide: Cyclic pyranopterin monophosphate synthase (161 aa).

Substrate contacts are provided by residues Leu-78 to His-80 and Met-116 to Glu-117. The active site involves Asp-131.

Belongs to the MoaC family. In terms of assembly, homohexamer; trimer of dimers.

It carries out the reaction (8S)-3',8-cyclo-7,8-dihydroguanosine 5'-triphosphate = cyclic pyranopterin phosphate + diphosphate. It participates in cofactor biosynthesis; molybdopterin biosynthesis. Functionally, catalyzes the conversion of (8S)-3',8-cyclo-7,8-dihydroguanosine 5'-triphosphate to cyclic pyranopterin monophosphate (cPMP). The polypeptide is Cyclic pyranopterin monophosphate synthase (Bordetella parapertussis (strain 12822 / ATCC BAA-587 / NCTC 13253)).